Consider the following 473-residue polypeptide: Photosystem II CP43 reaction center protein (473 aa).

A propeptide spanning residues 1–14 (MKTLYSLRRFYHVE) is cleaved from the precursor. Residue Thr-15 is modified to N-acetylthreonine. At Thr-15 the chain carries Phosphothreonine. A run of 5 helical transmembrane segments spans residues 69 to 93 (LFEVAHFVPEKPMYEQGLILLPHLA), 134 to 155 (LLGPETLEESFPFFGYVWKDRN), 178 to 200 (KALYFGGIYDTWAPGGGDVRKIT), 255 to 275 (KPFAWARRALVWSGEAYLSYS), and 291 to 312 (WFNNTAYPSEFYGPTGPEASQA). Glu-367 is a [CaMn4O5] cluster binding site. The helical transmembrane segment at 447-471 (RARAAAAGFEKGIDRDFEPVLSMTP) threads the bilayer.

It belongs to the PsbB/PsbC family. PsbC subfamily. As to quaternary structure, PSII is composed of 1 copy each of membrane proteins PsbA, PsbB, PsbC, PsbD, PsbE, PsbF, PsbH, PsbI, PsbJ, PsbK, PsbL, PsbM, PsbT, PsbX, PsbY, PsbZ, Psb30/Ycf12, at least 3 peripheral proteins of the oxygen-evolving complex and a large number of cofactors. It forms dimeric complexes. Binds multiple chlorophylls and provides some of the ligands for the Ca-4Mn-5O cluster of the oxygen-evolving complex. It may also provide a ligand for a Cl- that is required for oxygen evolution. PSII binds additional chlorophylls, carotenoids and specific lipids. is required as a cofactor.

It localises to the plastid. Its subcellular location is the chloroplast thylakoid membrane. One of the components of the core complex of photosystem II (PSII). It binds chlorophyll and helps catalyze the primary light-induced photochemical processes of PSII. PSII is a light-driven water:plastoquinone oxidoreductase, using light energy to abstract electrons from H(2)O, generating O(2) and a proton gradient subsequently used for ATP formation. This is Photosystem II CP43 reaction center protein from Phaseolus vulgaris (Kidney bean).